Here is a 526-residue protein sequence, read N- to C-terminus: Thymocyte selection-associated high mobility group box protein TOX (526 aa).

A compositionally biased stretch (polar residues) spans 194-203 (NMGGTNVAHN). A disordered region spans residues 194-264 (NMGGTNVAHN…KKDPNEPQKP (71 aa)). Residues 209 to 220 (GSKSATPSPSSS) are compositionally biased toward low complexity. Positions 228-245 (DASKINGGEKRPASDMGK) are enriched in basic and acidic residues. A Nuclear localization signal motif is present at residues 237 to 256 (KRPASDMGKKPKTPKKKKKK). A compositionally biased stretch (basic residues) spans 246 to 256 (KPKTPKKKKKK). The HMG box DNA-binding region spans 261 to 329 (PQKPVSAYAL…EYLKQLAAYR (69 aa)).

It belongs to the high motility group (HMG) box superfamily. Interacts with HBO1 complex composed at least of KAT7/HBO1, ING4, MEAF6, and JADE2; this complex is involved in histone acetylation. Interacts with DNMT1, LEO1, PAF1, SAP130 and SIN3A; these interactors regulate chromatin remodeling. Interacts with an array of proteins involved in RNA processing and translation and DNA replication. As to expression, expressed in neurons of the subventricular zone (at protein level). Expressed in distinct subpopulations of thymocytes undergoing positive selection: double CD4-positive CD8-positive (DP) cells, CD4-positive CD8-low transitional cells and in single CD4-positive and CD8-positive cells (at protein level). Expressed in ILC progenitors and mature ILC subsets: ILC1, ILC2 and ILC3 (at protein level). Expressed in lymphoid tissue-inducer cells and bone marrow NK cell subsets. Abundant in thymus, liver and brain. Also detected in small intestine, spleen, stomach and testis. Highly expressed in tumor-infiltrating CD8-positive T cells (at protein level).

The protein localises to the nucleus. Its function is as follows. Transcriptional regulator with a major role in neural stem cell commitment and corticogenesis as well as in lymphoid cell development and lymphoid tissue organogenesis. Binds to GC-rich DNA sequences in the proximity of transcription start sites and may alter chromatin structure, modifying access of transcription factors to DNA. During cortical development, controls the neural stem cell pool by inhibiting the switch from proliferative to differentiating progenitors. Beyond progenitor cells, promotes neurite outgrowth in newborn neurons migrating to reach the cortical plate. May activate or repress critical genes for neural stem cell fate such as SOX2, EOMES and ROBO2. Plays an essential role in the development of lymphoid tissue-inducer (LTi) cells, a subset necessary for the formation of secondary lymphoid organs: peripheral lymph nodes and Peyer's patches. Acts as a developmental checkpoint and regulates thymocyte positive selection toward T cell lineage commitment. Required for the development of various T cell subsets, including CD4-positive helper T cells, CD8-positive cytotoxic T cells, regulatory T cells and CD1D-dependent natural killer T (NKT) cells. Required for the differentiation of common lymphoid progenitors (CMP) to innate lymphoid cells (ILC). May regulate the NOTCH-mediated gene program, promoting differentiation of the ILC lineage. Required at the progenitor phase of NK cell development in the bone marrow to specify NK cell lineage commitment. Upon chronic antigen stimulation, diverts T cell development by promoting the generation of exhaustive T cells, while suppressing effector and memory T cell programming. May regulate the expression of genes encoding inhibitory receptors such as PDCD1 and induce the exhaustion program, to prevent the overstimulation of T cells and activation-induced cell death. This Mus musculus (Mouse) protein is Thymocyte selection-associated high mobility group box protein TOX.